A 600-amino-acid chain; its full sequence is Alanine--tRNA ligase (600 aa).

Zn(2+) is bound by residues H463, H467, C565, and H569.

Belongs to the class-II aminoacyl-tRNA synthetase family. It depends on Zn(2+) as a cofactor.

The protein localises to the cytoplasm. The catalysed reaction is tRNA(Ala) + L-alanine + ATP = L-alanyl-tRNA(Ala) + AMP + diphosphate. Its function is as follows. Catalyzes the attachment of alanine to tRNA(Ala) in a two-step reaction: alanine is first activated by ATP to form Ala-AMP and then transferred to the acceptor end of tRNA(Ala). Also edits incorrectly charged Ser-tRNA(Ala) and Gly-tRNA(Ala) via its editing domain. The chain is Alanine--tRNA ligase (alaS) from Treponema denticola (strain ATCC 35405 / DSM 14222 / CIP 103919 / JCM 8153 / KCTC 15104).